A 341-amino-acid chain; its full sequence is uncharacterized protein (341 aa).

A disordered region spans residues 125–146; the sequence is DTVKHNGSGPRPEQASSHVHYS.

This sequence belongs to the cycloisomerase 2 family.

This is an uncharacterized protein from Lactococcus lactis subsp. cremoris (strain MG1363).